Reading from the N-terminus, the 225-residue chain is UPF0758 protein BB3258 (225 aa).

In terms of domain architecture, MPN spans 103–225; it reads ALANPDLVRR…TVSMAAQGHL (123 aa). Histidine 174, histidine 176, and aspartate 187 together coordinate Zn(2+). The JAMM motif motif lies at 174 to 187; sequence HNHPGGTAAASAAD.

It belongs to the UPF0758 family.

This Bordetella bronchiseptica (strain ATCC BAA-588 / NCTC 13252 / RB50) (Alcaligenes bronchisepticus) protein is UPF0758 protein BB3258.